The chain runs to 277 residues: MSKEDKEKTQIIDKDLDLSNAGRGVWLVKVPKYIAQKWEKAPTNMDVGKLRINKTPGQKAQVSLSLTPAVLALDPEEKIPTEHILDVSQVTKQTLGVFSHMAPSDGKENSTTSAAQPDNEKLYMEGRIVQKLECRPIADNCYMKLKLESIRKASEPQRRVQPIDKIVQNFKPVKDHAHNIEYRERKKAEGKKARDDKNAVMDMLFHAFEKHQYYNIKDLVKITNQPISYLKEILKDVCDYNMKNPHKNMWELKKEYRHYKTEEKKEEEHKSGSSDSE.

Belongs to the TFIIF beta subunit family. In terms of assembly, heterodimer of an alpha and a beta subunit.

The protein localises to the nucleus. In terms of biological role, TFIIF is a general transcription initiation factor that binds to RNA polymerase II and helps to recruit it to the initiation complex in collaboration with TFIIB. This is General transcription factor IIF subunit 2 (TfIIFbeta) from Drosophila melanogaster (Fruit fly).